A 262-amino-acid polypeptide reads, in one-letter code: Sulfur carrier protein FdhD (262 aa).

Catalysis depends on C105, which acts as the Cysteine persulfide intermediate. 246–251 (FVRKNR) is a Mo-bis(molybdopterin guanine dinucleotide) binding site.

It belongs to the FdhD family.

It localises to the cytoplasm. Required for formate dehydrogenase (FDH) activity. Acts as a sulfur carrier protein that transfers sulfur from IscS to the molybdenum cofactor prior to its insertion into FDH. The polypeptide is Sulfur carrier protein FdhD (Picrophilus torridus (strain ATCC 700027 / DSM 9790 / JCM 10055 / NBRC 100828 / KAW 2/3)).